We begin with the raw amino-acid sequence, 61 residues long: Large ribosomal subunit protein bL28 (61 aa).

The protein belongs to the bacterial ribosomal protein bL28 family.

The protein is Large ribosomal subunit protein bL28 of Lactobacillus johnsonii (strain CNCM I-12250 / La1 / NCC 533).